We begin with the raw amino-acid sequence, 84 residues long: uncharacterized protein (84 aa).

It belongs to the chlamydial CPn_0710/CT_666/TC_0037 family.

This is an uncharacterized protein from Chlamydia pneumoniae (Chlamydophila pneumoniae).